Reading from the N-terminus, the 218-residue chain is Zinc finger CCHC-type and RNA-binding motif-containing protein 1 (218 aa).

One can recognise an RRM domain in the interval 10–88 (STVYVSNLPF…RAIKASIAKD (79 aa)). Residues 105–122 (SRCYECGDTGHLSYACPK) form a CCHC-type zinc finger. The interval 119–218 (ACPKNMLGER…YFSDEDELSD (100 aa)) is disordered. The stretch at 132-188 (QKKEKKKRKRLVEEEEEEVVEEEESEDEGEDPALDSLSQAIAFQQARIDEEKNKYRH) forms a coiled coil. Positions 144 to 164 (EEEEEEVVEEEESEDEGEDPA) are enriched in acidic residues. Over residues 178–201 (RIDEEKNKYRHDPAEASTSEDSRR) the composition is skewed to basic and acidic residues.

Component of the U11/U12 snRNPs that are part of the U12-type spliceosome.

It is found in the nucleus. The polypeptide is Zinc finger CCHC-type and RNA-binding motif-containing protein 1 (zcrb1) (Xenopus laevis (African clawed frog)).